The primary structure comprises 242 residues: Biosynthetic peptidoglycan transglycosylase (242 aa).

The helical transmembrane segment at 19-39 threads the bilayer; the sequence is ILAALAVFWGGGIALFSVVPV.

It belongs to the glycosyltransferase 51 family.

It localises to the cell inner membrane. The catalysed reaction is [GlcNAc-(1-&gt;4)-Mur2Ac(oyl-L-Ala-gamma-D-Glu-L-Lys-D-Ala-D-Ala)](n)-di-trans,octa-cis-undecaprenyl diphosphate + beta-D-GlcNAc-(1-&gt;4)-Mur2Ac(oyl-L-Ala-gamma-D-Glu-L-Lys-D-Ala-D-Ala)-di-trans,octa-cis-undecaprenyl diphosphate = [GlcNAc-(1-&gt;4)-Mur2Ac(oyl-L-Ala-gamma-D-Glu-L-Lys-D-Ala-D-Ala)](n+1)-di-trans,octa-cis-undecaprenyl diphosphate + di-trans,octa-cis-undecaprenyl diphosphate + H(+). Its pathway is cell wall biogenesis; peptidoglycan biosynthesis. Peptidoglycan polymerase that catalyzes glycan chain elongation from lipid-linked precursors. This Salmonella newport (strain SL254) protein is Biosynthetic peptidoglycan transglycosylase.